The sequence spans 237 residues: Periplasmic deoxyribonuclease (237 aa).

The first 27 residues, 1 to 27, serve as a signal peptide directing secretion; the sequence is MSRPSRVLGLPLLSLGLTLLVSTPLQA.

The protein belongs to the EndA/NucM nuclease family.

It localises to the periplasm. Its function is as follows. Endonuclease which is capable of degrading plasmid DNA. The polypeptide is Periplasmic deoxyribonuclease (dnsH) (Aeromonas hydrophila).